The following is a 150-amino-acid chain: MGLEKSFILFSLLVLVLGWVQPSLGRKPSVQDFKRQHMDPDSPPNSRPTYCNQMMKRRGMTKGSCKRVNTFLHESWATVKAICSQRQMTCKTSSRNNCHKSSSTLHITDCRLKGSSKYPNCDYTTTNSQKHIIIACEGNPLVPVHFDASV.

The first 25 residues, 1 to 25, serve as a signal peptide directing secretion; it reads MGLEKSFILFSLLVLVLGWVQPSLG. Position 35 (Arg-35) interacts with substrate. His-37 (proton acceptor) is an active-site residue. Intrachain disulfides connect Cys-51–Cys-110, Cys-65–Cys-121, Cys-83–Cys-136, and Cys-90–Cys-98. Substrate-binding positions include 66–70, Lys-91, and Arg-111; that span reads KRVNT. His-145 (proton donor) is an active-site residue.

It belongs to the pancreatic ribonuclease family. In terms of assembly, monomer.

It is found in the secreted. It catalyses the reaction an [RNA] containing cytidine + H2O = an [RNA]-3'-cytidine-3'-phosphate + a 5'-hydroxy-ribonucleotide-3'-[RNA].. The catalysed reaction is an [RNA] containing uridine + H2O = an [RNA]-3'-uridine-3'-phosphate + a 5'-hydroxy-ribonucleotide-3'-[RNA].. In terms of biological role, endonuclease that catalyzes the cleavage of RNA on the 3' side of pyrimidine nucleotides. Acts on single-stranded and double-stranded RNA. The protein is Ribonuclease pancreatic delta-type (Rnase1d) of Rattus norvegicus (Rat).